The following is a 563-amino-acid chain: NAD-dependent malic enzyme (563 aa).

Y101 functions as the Proton donor in the catalytic mechanism. R154 is an NAD(+) binding site. K172 serves as the catalytic Proton acceptor. A divalent metal cation-binding residues include E243, D244, and D267. 2 residues coordinate NAD(+): D267 and N416.

The protein belongs to the malic enzymes family. In terms of assembly, homotetramer. Requires Mg(2+) as cofactor. Mn(2+) serves as cofactor.

The catalysed reaction is (S)-malate + NAD(+) = pyruvate + CO2 + NADH. It catalyses the reaction oxaloacetate + H(+) = pyruvate + CO2. In Pseudomonas syringae pv. syringae (strain B728a), this protein is NAD-dependent malic enzyme.